The sequence spans 693 residues: MAQGSHQIDFQVLHDLRQKFPEVPEVVVSRCMLQNNNNLDACCAVLSQESTRYLYGEGDLNFSDESGISGLRNHMTSLNLDLQSQNVYHHGREGSRVNGSRTLTHSVSDGQLQGGQSNNELFQQEPQTAPAQVPQGFNVFGMPSTSGASNSTPHLGFHLGSKGTSNLSQQTPRFNPIMVTLAPNIQTGRSTPTSLHIHGVPPPVLNSPQGNSIYIRPYITTPSGAARQTQQHSGWVSQFNPVNPQQAYQPSQPGPWTTYPASNPLPHTSTQQPNQQGHQTSHVYMPISSPTTPQPPTVHSSASSQSSAHSQYNIQNISTGPRKNQIEIKLEPPQRNSSSKLRSSGPRTASTSSLVNSQTLNRNQPTVYIAASPPSTDEMISRSQPKVYISANASTGDEQGMRNQPTLFISTNSGASAASRNMSGQVSMGPAFIHHHPPKSRVLGGNSAASPRVVVTQPNTKYTFKITVSPNKPPAVSPGVVSPTFELTNLLNHPDHYVETETIQHLTDPTLAHVDRVSEARKLSMGSDDAAYTQALLVHQKARMERLQRELEMQKKKLDKLKSEVNEMENSLTRRRLKRSNSMSQIPSLEEMQQLRSCNRQLQIDIDCLTKEIDLFQARGPHFNPSAIHNFYDNIGFVGPVPPKPKDQRSTIKAPKTQDTEDEEGAQWNCTACTFLNHPALIRCEQCEMPRHF.

Positions isoleucine 8–threonine 51 constitute a CUE domain. Positions histidine 90 to serine 117 are disordered. Residues valine 97–serine 117 are compositionally biased toward polar residues. Residue arginine 173 is modified to Asymmetric dimethylarginine. The span at glycine 224–histidine 282 shows a compositional bias: polar residues. The interval glycine 224–serine 310 is disordered. The span at proline 286–serine 310 shows a compositional bias: low complexity. Lysine 329 is covalently cross-linked (Glycyl lysine isopeptide (Lys-Gly) (interchain with G-Cter in SUMO)). Residues leucine 330–asparagine 361 form a disordered region. Over residues glutamine 334–asparagine 361 the composition is skewed to polar residues. Residues serine 372, serine 450, serine 482, and serine 524 each carry the phosphoserine modification. Residues tyrosine 532–arginine 619 are a coiled coil. A Glycyl lysine isopeptide (Lys-Gly) (interchain with G-Cter in SUMO) cross-link involves residue lysine 562. The disordered stretch occupies residues glutamate 564–methionine 583. Serine 582 bears the Phosphoserine mark. Residue lysine 611 forms a Glycyl lysine isopeptide (Lys-Gly) (interchain with G-Cter in ubiquitin) linkage. The interval proline 640–glutamate 663 is disordered. The RanBP2-type zinc finger occupies glutamate 663–phenylalanine 693. An interaction with polyubiquitin region spans residues phenylalanine 675–glutamate 685.

In terms of assembly, interacts with MAP3K7 and TRAF6. Identified in the TRIKA2 complex composed of MAP3K7, TAB1 and TAB2. Binds 'Lys-63'-linked polyubiquitin chains. Interacts with NCOR1 and HDAC3 to form a ternary complex. Interacts (via C-terminal) with NUMBL (via PTB domain). Interacts (via the C-terminus) with DYNC2I2 (via WD domains). Interacts with RBCK1. Interacts with TRIM5. Interacts with TRIM38 (via B30.2/SPRY domain), leading to its translocation to lysosomes and degradation. Interacts with ASB1; this interaction promotes TAB2 stability. SUMOylated by TRIM60; leading to inhibition of MAPK/NF-kappaB activation and the innate immune response. Post-translationally, ubiquitinated; following IL1 stimulation or TRAF6 overexpression. Ubiquitination involves RBCK1 leading to proteasomal degradation. Ubiquitinated at Lys-611 by TRIM45 leading to proteasomal degradation. In terms of processing, degraded in a lysosome-dependent manner following interaction with TRIM38. Phosphorylated.

The protein resides in the membrane. Its subcellular location is the endosome membrane. The protein localises to the lysosome membrane. It localises to the cytoplasm. It is found in the cytosol. Functionally, adapter required to activate the JNK and NF-kappa-B signaling pathways through the specific recognition of 'Lys-63'-linked polyubiquitin chains by its RanBP2-type zinc finger (NZF). Acts as an adapter linking MAP3K7/TAK1 and TRAF6 to 'Lys-63'-linked polyubiquitin chains. The RanBP2-type zinc finger (NZF) specifically recognizes Lys-63'-linked polyubiquitin chains unanchored or anchored to the substrate proteins such as RIPK1/RIP1 and RIPK2: this acts as a scaffold to organize a large signaling complex to promote autophosphorylation of MAP3K7/TAK1, and subsequent activation of I-kappa-B-kinase (IKK) core complex by MAP3K7/TAK1. Also recognizes and binds Lys-63'-linked polyubiquitin chains of heterotypic 'Lys-63'-/'Lys-48'-linked branched ubiquitin chains. Regulates the IL1-mediated translocation of NCOR1 out of the nucleus. Involved in heart development. The chain is TGF-beta-activated kinase 1 and MAP3K7-binding protein 2 (Tab2) from Rattus norvegicus (Rat).